The following is a 90-amino-acid chain: Probable Fe(2+)-trafficking protein (90 aa).

The protein belongs to the Fe(2+)-trafficking protein family.

Its function is as follows. Could be a mediator in iron transactions between iron acquisition and iron-requiring processes, such as synthesis and/or repair of Fe-S clusters in biosynthetic enzymes. This is Probable Fe(2+)-trafficking protein from Chromohalobacter salexigens (strain ATCC BAA-138 / DSM 3043 / CIP 106854 / NCIMB 13768 / 1H11).